Reading from the N-terminus, the 116-residue chain is MEEKNTVSLSKHIERPVEVVESHSTYILSAQGLYLTERVLRSYFKQPDLIITWKDSMRAYLTFSSPQEAQKAYLDSLRWGSQLNAIIKPFYGSHDEVLRLCKRKRIIPLQNFLTSG.

This is an uncharacterized protein from Schizosaccharomyces pombe (strain 972 / ATCC 24843) (Fission yeast).